A 463-amino-acid chain; its full sequence is MTKDMETIVSLAKHRGFVFPGSDIYGGLSNTWDYGPLGVELKNNVKKAWWQKFITQSPYNVGIDAAILMNPKTWEASGHLGNFNDPMIDNKDSKIRYRADKIIEDYMLNEKGDENFVADGLSFDEMKRIIDEEGIVCPVSGTANWTDIRQFNLMFKTFQGVTEDSTNEIFLRPETAQGIFVNYKNVQRTMRKKLPFGIGQIGKSFRNEITPGNFIFRTREFEQMELEFFCKPGEEIEWQNYWKTFASQWLKDLNLSEEATRLRDHDADELSHYSNATTDIEYRFPFGWGELWGIASRTDFDLKKHSEHSGEDFQYHDQETGEKYIPYCIEPSLGADRVTLAFLCDAYDEEGVEGSKDSRTVLHFHPALAPYKAAVLPLSKKLSGDAIKVFEELSADFAIDFDESQSIGKRYRRQDEIGTPYCITFDFDSLEDEKVTVRDRDTMEQVRMPITELKSFLAEKVKF.

Arginine 98 and glutamate 174 together coordinate substrate. ATP is bound by residues 206–208, 216–221, 290–291, and 334–337; these read RNE, FRTREF, EL, and GADR. Residue 221–225 participates in substrate binding; the sequence is FEQME. 330–334 is a substrate binding site; it reads EPSLG.

This sequence belongs to the class-II aminoacyl-tRNA synthetase family. In terms of assembly, homodimer.

It is found in the cytoplasm. It carries out the reaction tRNA(Gly) + glycine + ATP = glycyl-tRNA(Gly) + AMP + diphosphate. Catalyzes the attachment of glycine to tRNA(Gly). The polypeptide is Glycine--tRNA ligase (Staphylococcus saprophyticus subsp. saprophyticus (strain ATCC 15305 / DSM 20229 / NCIMB 8711 / NCTC 7292 / S-41)).